The chain runs to 306 residues: N-acetylmuramic acid 6-phosphate etherase (306 aa).

The SIS domain occupies 59-222 (TAQALGRGGR…STGVMVCLGK (164 aa)). Glu-87 (proton donor) is an active-site residue. Residue Glu-118 is part of the active site.

It belongs to the GCKR-like family. MurNAc-6-P etherase subfamily. Homodimer.

The catalysed reaction is N-acetyl-D-muramate 6-phosphate + H2O = N-acetyl-D-glucosamine 6-phosphate + (R)-lactate. The protein operates within amino-sugar metabolism; N-acetylmuramate degradation. Specifically catalyzes the cleavage of the D-lactyl ether substituent of MurNAc 6-phosphate, producing GlcNAc 6-phosphate and D-lactate. The protein is N-acetylmuramic acid 6-phosphate etherase of Rippkaea orientalis (strain PCC 8801 / RF-1) (Cyanothece sp. (strain PCC 8801)).